The primary structure comprises 208 residues: Receptor expression-enhancing protein 6 (208 aa).

Helical transmembrane passes span 49-69 (GAFL…GFVY), 93-113 (WVIY…LHWF), and 115-135 (FYYV…SWNG). The interval 187–208 (VGPAESEPRSLPSSAHTEPTVD) is disordered. Over residues 197–208 (LPSSAHTEPTVD) the composition is skewed to polar residues.

It belongs to the DP1 family.

The protein localises to the endoplasmic reticulum membrane. It localises to the cytoplasmic vesicle. It is found in the clathrin-coated vesicle membrane. Required correct function and survival of retinal photoreceptors. Required for retinal development. In rod photoreceptors, facilitates stability and/or trafficking of guanylate cyclases and is required to maintain endoplasmic reticulum and mitochondrial homeostasis. May play a role in clathrin-coated intracellular vesicle trafficking of proteins from the endoplasmic reticulum to the retinal rod plasma membrane. The chain is Receptor expression-enhancing protein 6 from Danio rerio (Zebrafish).